The sequence spans 113 residues: Integration host factor subunit alpha (113 aa).

The protein belongs to the bacterial histone-like protein family. Heterodimer of an alpha and a beta chain.

This protein is one of the two subunits of integration host factor, a specific DNA-binding protein that functions in genetic recombination as well as in transcriptional and translational control. This is Integration host factor subunit alpha from Rhodopseudomonas palustris (strain BisA53).